Consider the following 848-residue polypeptide: Nuclear cap-binding protein subunit 1 (848 aa).

Residues 8–228 (LLRIGEKGPE…DLLDRIQSLA (221 aa)) form the MIF4G domain. The segment at 767 to 786 (EDDKPSAMDVDSENGNPKKS) is disordered.

Belongs to the NCBP1 family. As to quaternary structure, component of the nuclear cap-binding complex (CBC), a heterodimer composed of ABH1/CBP80 and CBP20 that interacts with m7GpppG-capped RNA. Expressed in all tissues analyzed, including roots, stems, leaves and flowers.

The protein resides in the nucleus. Its subcellular location is the cytoplasm. Functionally, component of the cap-binding complex (CBC), which binds cotranscriptionally to the 5'-cap of pre-mRNAs and is involved in various processes such as pre-mRNA splicing and RNA-mediated gene silencing (RNAi) by microRNAs (miRNAs). The CBC complex is involved in miRNA-mediated RNA interference and is required for primary miRNA processing. In the CBC complex, ABH1/CBP80 does not bind directly capped RNAs (m7GpppG-capped RNA) but is required to stabilize the movement of the N-terminal loop of CBP20 and lock the CBC into a high affinity cap-binding state with the cap structure. Involved in flowering regulation, possibly by regulating pre-mRNA splicing of FLC gene. Acts as a negative regulator of abscisic acid signaling in guard cells. In Arabidopsis thaliana (Mouse-ear cress), this protein is Nuclear cap-binding protein subunit 1 (ABH1).